The chain runs to 85 residues: RNA-binding protein Hfq (85 aa).

In terms of domain architecture, Sm spans 10–70; the sequence is DIFLNGARKN…ISTINPAKPL (61 aa).

This sequence belongs to the Hfq family. Homohexamer.

RNA chaperone that binds small regulatory RNA (sRNAs) and mRNAs to facilitate mRNA translational regulation in response to envelope stress, environmental stress and changes in metabolite concentrations. Also binds with high specificity to tRNAs. This Clostridium botulinum (strain 657 / Type Ba4) protein is RNA-binding protein Hfq.